The primary structure comprises 447 residues: Aladin (447 aa).

The interval Ser-49–Glu-69 is disordered. WD repeat units lie at residues Leu-97–Ile-138, Asp-142–Leu-181, Gln-210–Ile-250, and Arg-252–Trp-291.

Part of the nuclear pore complex (NPC). The NPC has an eight-fold symmetrical structure comprising a central transport channel and two rings, the cytoplasmic and nuclear rings, to which eight filaments are attached. The cytoplasmic filaments have loose ends, while the nuclear filaments are joined in a distal ring, forming a nuclear basket. NPCs are highly dynamic in configuration and composition, and can be devided in 3 subcomplexes, the NUP62 subcomplex, the NUP107-160 subcomplex and the NUP93 subcomplex, containing approximately 30 different nucleoporin proteins.

It is found in the nucleus envelope. It localises to the nucleus. The protein localises to the nuclear pore complex. This is Aladin from Arabidopsis thaliana (Mouse-ear cress).